The chain runs to 268 residues: Inositol monophosphatase 3 (268 aa).

Positions 71, 91, 93, and 94 each coordinate Mg(2+). Glutamate 71 contributes to the substrate binding site. Residues 93 to 96, 194 to 196, glutamate 213, and aspartate 221 each bind substrate; these read LDGT and GSC. Position 221 (aspartate 221) interacts with Mg(2+).

It belongs to the inositol monophosphatase superfamily. It depends on Mg(2+) as a cofactor. Expressed in the shoot apex, roots, stems, leaves, flowers and young and mature green fruits.

It carries out the reaction a myo-inositol phosphate + H2O = myo-inositol + phosphate. The protein operates within polyol metabolism; myo-inositol biosynthesis; myo-inositol from D-glucose 6-phosphate: step 2/2. Functionally, responsible for the provision of inositol required for synthesis of phosphatidylinositol and polyphosphoinositides. The chain is Inositol monophosphatase 3 (IMP3) from Solanum lycopersicum (Tomato).